Consider the following 295-residue polypeptide: Small ribosomal subunit protein mS23 (295 aa).

The segment at 249–295 is disordered; that stretch reads IGSVVEEEKSQSSLFEDLLSNDNLQSEPEVEQSGQQQQQEQPKQETN. Residues 273–289 show a composition bias toward low complexity; sequence QSEPEVEQSGQQQQQEQ.

Belongs to the mitochondrion-specific ribosomal protein mS23 family. Component of the mitochondrial small ribosomal subunit (mt-SSU).

The protein localises to the mitochondrion. In terms of biological role, component of the mitochondrial ribosome (mitoribosome), a dedicated translation machinery responsible for the synthesis of mitochondrial genome-encoded proteins, including at least some of the essential transmembrane subunits of the mitochondrial respiratory chain. The mitoribosomes are attached to the mitochondrial inner membrane and translation products are cotranslationally integrated into the membrane. The protein is Small ribosomal subunit protein mS23 (RSM25) of Candida albicans (strain SC5314 / ATCC MYA-2876) (Yeast).